The primary structure comprises 443 residues: Leucine/methionine racemase (443 aa).

Pyridoxal 5'-phosphate is bound by residues 110–111 (GS) and Gln247. Lys273 carries the post-translational modification N6-(pyridoxal phosphate)lysine. Thr302 contributes to the pyridoxal 5'-phosphate binding site.

Belongs to the class-III pyridoxal-phosphate-dependent aminotransferase family. The cofactor is pyridoxal 5'-phosphate.

The catalysed reaction is L-leucine = D-leucine. It catalyses the reaction L-methionine = D-methionine. Its activity is regulated as follows. Activity is strongly inhibited by several metal ions, including Co(2+), Zn(2+), Ni(2+), Cu(2+) and Fe(3+), and nonsubstrate amino acids such as L-arginine and L-lysine. Activity is completely abolished in the presence of hydroxylamine, an inhibitor of pyridoxal phosphate-dependent enzymes. Amino acid racemase with moderate substrate specificity. Is primarily active toward leucine, which is the preferred substrate, and methionine. Also exhibits lower levels of activity toward phenylalanine, alanine and serine. The sequence is that of Leucine/methionine racemase from Thermococcus litoralis (strain ATCC 51850 / DSM 5473 / JCM 8560 / NS-C).